The chain runs to 125 residues: Protein ELF4-LIKE 1 (125 aa).

Positions 1–18 (MEASRNRSLVGNNRSPEM) are enriched in polar residues. The segment at 1–28 (MEASRNRSLVGNNRSPEMNENDGEDVAA) is disordered.

It belongs to the EARLY FLOWERING 4 family. Homodimer.

It localises to the nucleus. Functionally, component of the central CCA1/LHY-TOC1 feedback loop in the circadian clock that promotes clock accuracy and is required for sustained rhythms in the absence of daily light/dark cycles. The protein is Protein ELF4-LIKE 1 (EFL1) of Arabidopsis thaliana (Mouse-ear cress).